We begin with the raw amino-acid sequence, 436 residues long: Trigger factor (436 aa).

The PPIase FKBP-type domain maps to 161–246; that stretch reads EDQLNIDFVG…VNTVSEPKLP (86 aa).

Belongs to the FKBP-type PPIase family. Tig subfamily.

Its subcellular location is the cytoplasm. The catalysed reaction is [protein]-peptidylproline (omega=180) = [protein]-peptidylproline (omega=0). Functionally, involved in protein export. Acts as a chaperone by maintaining the newly synthesized protein in an open conformation. Functions as a peptidyl-prolyl cis-trans isomerase. In Pseudomonas savastanoi pv. phaseolicola (strain 1448A / Race 6) (Pseudomonas syringae pv. phaseolicola (strain 1448A / Race 6)), this protein is Trigger factor.